The following is a 104-amino-acid chain: Naphthalene 1,2-dioxygenase system, ferredoxin component (104 aa).

Positions 6-101 (IEAVALSDIL…VKIENLRVMI (96 aa)) constitute a Rieske domain. The [2Fe-2S] cluster site is built by Cys-45, His-47, Cys-64, and His-67.

The protein belongs to the bacterial ring-hydroxylating dioxygenase ferredoxin component family. The naphthalene dioxygenase (NDO) multicomponent enzyme system is composed of an electron transfer component and a dioxygenase component (iron sulfur protein (ISP)). The electron transfer component is composed of a ferredoxin reductase (NdoR) and a ferredoxin (NdoA), and the dioxygenase component is formed of a heterohexamer (trimer of heterodimers) of three large alpha subunits (NdoB) and three small beta subunits (NdoC). The cofactor is [2Fe-2S] cluster.

Its pathway is aromatic compound metabolism; naphthalene degradation. Functionally, component of the naphthalene dioxygenase (NDO) multicomponent enzyme system which catalyzes the incorporation of both atoms of molecular oxygen into naphthalene to form cis-(1R,2S)-dihydroxy-1,2-dihydronaphthalene. Functions as an intermediate electron transfer protein via a specific interaction with iron sulfur protein components (ISP) (NdoB and NdoC). Also able to catalyze the cis-dihydroxylation of biphenyl and phenanthrene. This Pseudomonas putida (Arthrobacter siderocapsulatus) protein is Naphthalene 1,2-dioxygenase system, ferredoxin component.